A 202-amino-acid polypeptide reads, in one-letter code: Small ribosomal subunit protein uS4 (202 aa).

Residues 91–154 (SMLSSVLYNS…VNLPSVLAAI (64 aa)) enclose the S4 RNA-binding domain.

The protein belongs to the universal ribosomal protein uS4 family. In terms of assembly, part of the 30S ribosomal subunit. Contacts protein S5. The interaction surface between S4 and S5 is involved in control of translational fidelity.

Its function is as follows. One of the primary rRNA binding proteins, it binds directly to 16S rRNA where it nucleates assembly of the body of the 30S subunit. With S5 and S12 plays an important role in translational accuracy. The protein is Small ribosomal subunit protein uS4 of Ehrlichia ruminantium (strain Gardel).